Here is a 1261-residue protein sequence, read N- to C-terminus: SNF2 domain-containing protein CLASSY 2 (1261 aa).

The disordered stretch occupies residues 458–479 (FQKRTSRSSRSVAPKTEDSDEP). In terms of domain architecture, Helicase ATP-binding spans 704–904 (DPTSGNIGGC…FNTLCLARPK (201 aa)). 717–724 (HSPGAGKT) is a binding site for ATP. The DEAH box signature appears at 855–858 (DEGH). The 166-residue stretch at 1067-1232 (FVLNLIFRVV…DPSLWQAEKI (166 aa)) folds into the Helicase C-terminal domain.

The protein belongs to the helicase family. Interacts with NRPD1 and SHH1.

The protein resides in the nucleus. Probable chromatin remodeling factor. This is SNF2 domain-containing protein CLASSY 2 (CLSY2) from Arabidopsis thaliana (Mouse-ear cress).